Reading from the N-terminus, the 548-residue chain is MKHLHDLPAWSKLWNHFDDSKTLHMREMFEQDPQRAERYWLQVGGLTLDYSKNRINDETMSLLFELAREAGVPERMRQMFHGEKINTTENRAVLHVALRNRTNSPIMVDGEDVMPKVNRVLQRMGEFAHEVRSGSWLGYTNQVITDVVNIGIGGSDLGPLTMCTALKPFGHPRLNMHFVSNVDGSQLRDVLSKVHPETTLFIIASKTFTTQETLTNALTAREWFLNHAGDEEAVAKHFAAVSTNRKAVAEFGIDIANMFEFWDWVGGRYSLWSAIGLPIMLYLGEENFIEMLNGAHLMDQHFINTPLERNLPVILALIGIWYINYYGGGSHVIAPYDQHLHRLPKFIQQLDMESNGKQVTLDGKAVGHETSPIIWGETGINGQHAFFQLLHQGTHITPIDLIASLEKRSNLPGHHEILLANVFAQAEAFMCGKTPDEVRAELKAQGMDEARIEELVPHKTFSGNRPTNLILMDKVNPRNMGSLIAMYEHKTFVQGIIWGINSFDQWGVELGKQLAKTILGELTGETEPQKHDSSTERLINLYLQTNRK.

The Proton donor role is filled by Glu353. Catalysis depends on residues His384 and Lys512.

The protein belongs to the GPI family.

The protein localises to the cytoplasm. It catalyses the reaction alpha-D-glucose 6-phosphate = beta-D-fructose 6-phosphate. Its pathway is carbohydrate biosynthesis; gluconeogenesis. The protein operates within carbohydrate degradation; glycolysis; D-glyceraldehyde 3-phosphate and glycerone phosphate from D-glucose: step 2/4. In terms of biological role, catalyzes the reversible isomerization of glucose-6-phosphate to fructose-6-phosphate. The polypeptide is Glucose-6-phosphate isomerase 1 (Neisseria gonorrhoeae (strain ATCC 700825 / FA 1090)).